We begin with the raw amino-acid sequence, 1364 residues long: DNA-directed RNA polymerase subunit beta' (1364 aa).

The disordered stretch occupies residues 1–42; it reads MTSSSSKSNKSRKSSKAAKDTTPVHESASRPLSKTPPPFRNH. Zn(2+)-binding residues include Cys-250, Cys-317, Cys-324, and Cys-327.

The protein belongs to the RNA polymerase beta' chain family. RpoC2 subfamily. In cyanobacteria the RNAP catalytic core is composed of 2 alpha, 1 beta, 1 beta', 1 gamma and 1 omega subunit. When a sigma factor is associated with the core the holoenzyme is formed, which can initiate transcription. The cofactor is Zn(2+).

It carries out the reaction RNA(n) + a ribonucleoside 5'-triphosphate = RNA(n+1) + diphosphate. In terms of biological role, DNA-dependent RNA polymerase catalyzes the transcription of DNA into RNA using the four ribonucleoside triphosphates as substrates. In Parasynechococcus marenigrum (strain WH8102), this protein is DNA-directed RNA polymerase subunit beta'.